The sequence spans 364 residues: tRNA 2-selenouridine synthase (364 aa).

One can recognise a Rhodanese domain in the interval leucine 14–isoleucine 137. Catalysis depends on cysteine 97, which acts as the S-selanylcysteine intermediate.

Belongs to the SelU family. Monomer.

It catalyses the reaction 5-methylaminomethyl-2-thiouridine(34) in tRNA + selenophosphate + (2E)-geranyl diphosphate + H2O + H(+) = 5-methylaminomethyl-2-selenouridine(34) in tRNA + (2E)-thiogeraniol + phosphate + diphosphate. The catalysed reaction is 5-methylaminomethyl-2-thiouridine(34) in tRNA + (2E)-geranyl diphosphate = 5-methylaminomethyl-S-(2E)-geranyl-thiouridine(34) in tRNA + diphosphate. It carries out the reaction 5-methylaminomethyl-S-(2E)-geranyl-thiouridine(34) in tRNA + selenophosphate + H(+) = 5-methylaminomethyl-2-(Se-phospho)selenouridine(34) in tRNA + (2E)-thiogeraniol. The enzyme catalyses 5-methylaminomethyl-2-(Se-phospho)selenouridine(34) in tRNA + H2O = 5-methylaminomethyl-2-selenouridine(34) in tRNA + phosphate. Involved in the post-transcriptional modification of the uridine at the wobble position (U34) of tRNA(Lys), tRNA(Glu) and tRNA(Gln). Catalyzes the conversion of 2-thiouridine (S2U-RNA) to 2-selenouridine (Se2U-RNA). Acts in a two-step process involving geranylation of 2-thiouridine (S2U) to S-geranyl-2-thiouridine (geS2U) and subsequent selenation of the latter derivative to 2-selenouridine (Se2U) in the tRNA chain. The polypeptide is tRNA 2-selenouridine synthase (Shigella boydii serotype 18 (strain CDC 3083-94 / BS512)).